A 547-amino-acid polypeptide reads, in one-letter code: ATP synthase subunit alpha (547 aa).

Gly172–Thr179 contributes to the ATP binding site.

Belongs to the ATPase alpha/beta chains family. F-type ATPases have 2 components, CF(1) - the catalytic core - and CF(0) - the membrane proton channel. CF(1) has five subunits: alpha(3), beta(3), gamma(1), delta(1), epsilon(1). CF(0) has three main subunits: a(1), b(2) and c(9-12). The alpha and beta chains form an alternating ring which encloses part of the gamma chain. CF(1) is attached to CF(0) by a central stalk formed by the gamma and epsilon chains, while a peripheral stalk is formed by the delta and b chains.

It localises to the cell membrane. The catalysed reaction is ATP + H2O + 4 H(+)(in) = ADP + phosphate + 5 H(+)(out). Its function is as follows. Produces ATP from ADP in the presence of a proton gradient across the membrane. The alpha chain is a regulatory subunit. This Corynebacterium glutamicum (strain R) protein is ATP synthase subunit alpha.